The sequence spans 609 residues: Autophagy-related protein 22-1 (609 aa).

The next 4 membrane-spanning stretches (helical) occupy residues 95-115 (YYAG…GVEI), 117-137 (TASF…ILII), 151-171 (LLLV…LGVV), and 176-196 (MVGA…FVLL). The tract at residues 214 to 238 (AREPPPALDGSRAQEGHSDTTNDID) is disordered. Residues 225-238 (RAQEGHSDTTNDID) show a composition bias toward basic and acidic residues. N-linked (GlcNAc...) asparagine glycosylation is present at N244. A helical transmembrane segment spans residues 287-307 (IGIGYIGAIILQIVCILVVIA). N309 carries N-linked (GlcNAc...) asparagine glycosylation. 3 helical membrane-spanning segments follow: residues 317-337 (LVLF…ALWL), 381-401 (ILLF…VSGT), and 415-435 (AALG…AFSW). N443 carries an N-linked (GlcNAc...) asparagine glycan. 4 helical membrane passes run 450–470 (IIAC…GFIP), 487–509 (FPLG…SFFG), 522–542 (ALYA…VGII), and 552–572 (AFVF…LVDV).

The protein belongs to the ATG22 family.

The protein localises to the vacuole membrane. Its function is as follows. Vacuolar effluxer which mediate the efflux of amino acids resulting from autophagic degradation. The release of autophagic amino acids allows the maintenance of protein synthesis and viability during nitrogen starvation. The polypeptide is Autophagy-related protein 22-1 (atg22-1) (Neosartorya fischeri (strain ATCC 1020 / DSM 3700 / CBS 544.65 / FGSC A1164 / JCM 1740 / NRRL 181 / WB 181) (Aspergillus fischerianus)).